We begin with the raw amino-acid sequence, 456 residues long: Membrane-bound lytic murein transglycosylase F (456 aa).

The signal sequence occupies residues M1–C22. The non-LT domain stretch occupies residues S23–F267. The segment at G268–L456 is LT domain. The active site involves E314.

The protein in the N-terminal section; belongs to the bacterial solute-binding protein 3 family. This sequence in the C-terminal section; belongs to the transglycosylase Slt family.

Its subcellular location is the cell outer membrane. The catalysed reaction is Exolytic cleavage of the (1-&gt;4)-beta-glycosidic linkage between N-acetylmuramic acid (MurNAc) and N-acetylglucosamine (GlcNAc) residues in peptidoglycan, from either the reducing or the non-reducing ends of the peptidoglycan chains, with concomitant formation of a 1,6-anhydrobond in the MurNAc residue.. Its function is as follows. Murein-degrading enzyme that degrades murein glycan strands and insoluble, high-molecular weight murein sacculi, with the concomitant formation of a 1,6-anhydromuramoyl product. Lytic transglycosylases (LTs) play an integral role in the metabolism of the peptidoglycan (PG) sacculus. Their lytic action creates space within the PG sacculus to allow for its expansion as well as for the insertion of various structures such as secretion systems and flagella. This chain is Membrane-bound lytic murein transglycosylase F, found in Maricaulis maris (strain MCS10) (Caulobacter maris).